We begin with the raw amino-acid sequence, 112 residues long: MAYRKLGRLAGHRKMMLRNIVTSLLKHGKIETTELRAKELKSLAEKMITLGKRGDLHSRRQALAYLLDEDVVTKLFKEIGPRYADKNGGYTRIVKTGFRQGDGAPMVLIELV.

Belongs to the bacterial ribosomal protein bL17 family. As to quaternary structure, part of the 50S ribosomal subunit. Contacts protein L32.

The sequence is that of Large ribosomal subunit protein bL17 from Moorella thermoacetica (strain ATCC 39073 / JCM 9320).